Here is an 887-residue protein sequence, read N- to C-terminus: Alanine--tRNA ligase (887 aa).

Residues His-563, His-567, Cys-677, and His-681 each coordinate Zn(2+).

It belongs to the class-II aminoacyl-tRNA synthetase family. It depends on Zn(2+) as a cofactor.

The protein localises to the cytoplasm. The catalysed reaction is tRNA(Ala) + L-alanine + ATP = L-alanyl-tRNA(Ala) + AMP + diphosphate. In terms of biological role, catalyzes the attachment of alanine to tRNA(Ala) in a two-step reaction: alanine is first activated by ATP to form Ala-AMP and then transferred to the acceptor end of tRNA(Ala). Also edits incorrectly charged Ser-tRNA(Ala) and Gly-tRNA(Ala) via its editing domain. This is Alanine--tRNA ligase from Dinoroseobacter shibae (strain DSM 16493 / NCIMB 14021 / DFL 12).